Reading from the N-terminus, the 372-residue chain is MKYLTLLTVLSTALATPLQHQHHHHHEHARRAEVTKVVYVNGNGDEVQSQVTENASSGASSGETAETIQTRSSSDVSSSSDSNPVASIASSVASSASSILSNIEGDLSAFSSPSKKFEDGVYDCDSVPVGQGVIGVDWISGLNGGWTTIMNENGDTSLNCKDGYYCSYACQAGMSKTQWPSEQPSNGMSIGGLYCKNGKLYRSNTDNDYLCEWGSKDVNFVSEISEDVAICRTDYPGSENMNIPTLLSAGGKAPCSVVDGDTYFKWQGGKTSTQYYVNNAGVSVEDGCIWGTEGSGVGNWAPVVLGSGTTGGKTYLSLIPNPNNKDKPNYNIKIVGDDVNGDCKYENGQYNGSGSDGCTVTVNSGSAKFVFY.

A signal peptide spans 1 to 15 (MKYLTLLTVLSTALA). The tract at residues 51–85 (VTENASSGASSGETAETIQTRSSSDVSSSSDSNPV) is disordered. The span at 52–85 (TENASSGASSGETAETIQTRSSSDVSSSSDSNPV) shows a compositional bias: low complexity. N-linked (GlcNAc...) asparagine glycans are attached at residues asparagine 54 and asparagine 351.

It belongs to the SUN family.

Its subcellular location is the secreted. It is found in the cell wall. Functionally, cell surface beta-glucosidase involved in cell wall maintenance and cytokinesis. Plays a role redundant to SUN41. The protein is Secreted beta-glucosidase SIM1 (SIM1) of Candida albicans (strain SC5314 / ATCC MYA-2876) (Yeast).